Here is a 472-residue protein sequence, read N- to C-terminus: Ulvan lyase (472 aa).

Residues 1–21 (MIIKQYLLKISLCVLLLGCDS) form the signal peptide. Asn46 and Asn109 together coordinate substrate. His110 acts as the Proton donor in catalysis. The substrate site is built by Lys112 and His130. The Proton acceptor role is filled by Tyr175. Substrate-binding residues include Arg191, His195, and Tyr233. His195 serves as a coordination point for Zn(2+). Residues His251, Cys253, and His265 each coordinate Zn(2+). His265 is a substrate binding site.

It belongs to the polysaccharide lyase 25 family.

Ulvan lyase involved in ulvan degradation. Ulvan is the main polysaccharide component of the Ulvales (green seaweed) cell wall. It is composed of disaccharide building blocks comprising 3-sulfated rhamnose (Rha3S) linked to D-glucuronic acid (GlcA), L-iduronic acid (IduA), or D-xylose (Xyl). Ulvan lyase catalyzes the endolytic cleavage of the glycosidic bond between Rha3S and the uronic acids GlcA or IduA, producing oligosaccharides that have unsaturated 4-deoxy-L-threo-hex-4-enopyranosiduronic acid (deltaUA) at the non-reducing end. This results eventually in the degradation of the ulvan polysaccharide into deltaUA-Rha3S disaccharides and deltaUA-Rha3S-Xyl-Rha3S tetrasaccharides. The protein is Ulvan lyase of Nonlabens ulvanivorans (Persicivirga ulvanivorans).